The primary structure comprises 85 residues: MAHKKGGGSTHNGRDSKPKMLGVKKFGGELISAGAIIVRQRGTKFHPGVNVGIGKDHTLFALVDGHVAFTTKGAMNKPTVNVATA.

Residues 1 to 21 (MAHKKGGGSTHNGRDSKPKML) are disordered.

Belongs to the bacterial ribosomal protein bL27 family.

The chain is Large ribosomal subunit protein bL27 from Albidiferax ferrireducens (strain ATCC BAA-621 / DSM 15236 / T118) (Rhodoferax ferrireducens).